The sequence spans 157 residues: Crossover junction endodeoxyribonuclease RuvC (157 aa).

Residues D7, E67, and D140 contribute to the active site. Positions 7, 67, and 140 each coordinate Mg(2+).

The protein belongs to the RuvC family. In terms of assembly, homodimer which binds Holliday junction (HJ) DNA. The HJ becomes 2-fold symmetrical on binding to RuvC with unstacked arms; it has a different conformation from HJ DNA in complex with RuvA. In the full resolvosome a probable DNA-RuvA(4)-RuvB(12)-RuvC(2) complex forms which resolves the HJ. Mg(2+) serves as cofactor.

It is found in the cytoplasm. The catalysed reaction is Endonucleolytic cleavage at a junction such as a reciprocal single-stranded crossover between two homologous DNA duplexes (Holliday junction).. The RuvA-RuvB-RuvC complex processes Holliday junction (HJ) DNA during genetic recombination and DNA repair. Endonuclease that resolves HJ intermediates. Cleaves cruciform DNA by making single-stranded nicks across the HJ at symmetrical positions within the homologous arms, yielding a 5'-phosphate and a 3'-hydroxyl group; requires a central core of homology in the junction. The consensus cleavage sequence is 5'-(A/T)TT(C/G)-3'. Cleavage occurs on the 3'-side of the TT dinucleotide at the point of strand exchange. HJ branch migration catalyzed by RuvA-RuvB allows RuvC to scan DNA until it finds its consensus sequence, where it cleaves and resolves the cruciform DNA. The polypeptide is Crossover junction endodeoxyribonuclease RuvC (Thermosipho melanesiensis (strain DSM 12029 / CIP 104789 / BI429)).